Here is an 83-residue protein sequence, read N- to C-terminus: UPF0297 protein LCK_00468 (83 aa).

The protein belongs to the UPF0297 family.

The chain is UPF0297 protein LCK_00468 from Leuconostoc citreum (strain KM20).